The chain runs to 369 residues: Outer membrane protein P2 (369 aa).

The N-terminal stretch at 1 to 20 is a signal peptide; the sequence is MKKTLAALIVGAFAASAANA.

This sequence belongs to the Gram-negative porin family. In terms of assembly, homotrimer.

Its subcellular location is the cell outer membrane. In terms of biological role, forms pores that allow passive diffusion of small molecules across the outer membrane. In Haemophilus influenzae, this protein is Outer membrane protein P2 (ompP2).